Consider the following 349-residue polypeptide: Anthranilate phosphoribosyltransferase (349 aa).

5-phospho-alpha-D-ribose 1-diphosphate is bound by residues G82, 85 to 86 (GD), 92 to 95 (NVST), 110 to 118 (KHGNRAVSG), and S122. G82 is a binding site for anthranilate. S94 contributes to the Mg(2+) binding site. Residue N113 participates in anthranilate binding. R168 contributes to the anthranilate binding site. D227 and E228 together coordinate Mg(2+).

It belongs to the anthranilate phosphoribosyltransferase family. In terms of assembly, homodimer. Mg(2+) is required as a cofactor.

It carries out the reaction N-(5-phospho-beta-D-ribosyl)anthranilate + diphosphate = 5-phospho-alpha-D-ribose 1-diphosphate + anthranilate. The protein operates within amino-acid biosynthesis; L-tryptophan biosynthesis; L-tryptophan from chorismate: step 2/5. Catalyzes the transfer of the phosphoribosyl group of 5-phosphorylribose-1-pyrophosphate (PRPP) to anthranilate to yield N-(5'-phosphoribosyl)-anthranilate (PRA). The sequence is that of Anthranilate phosphoribosyltransferase from Pseudomonas savastanoi pv. phaseolicola (strain 1448A / Race 6) (Pseudomonas syringae pv. phaseolicola (strain 1448A / Race 6)).